The following is a 137-amino-acid chain: Small ribosomal subunit protein uS11 (137 aa).

Residues 116-137 (EDVTPIPHDGTRRPGGKRGRRV) are disordered.

It belongs to the universal ribosomal protein uS11 family. Part of the 30S ribosomal subunit.

Its function is as follows. Located on the platform of the 30S subunit. This chain is Small ribosomal subunit protein uS11, found in Methanopyrus kandleri (strain AV19 / DSM 6324 / JCM 9639 / NBRC 100938).